Reading from the N-terminus, the 256-residue chain is 1-(5-phosphoribosyl)-5-[(5-phosphoribosylamino)methylideneamino] imidazole-4-carboxamide isomerase (256 aa).

The Proton acceptor role is filled by Asp-9. Residue Asp-130 is the Proton donor of the active site.

The protein belongs to the HisA/HisF family.

It is found in the cytoplasm. The enzyme catalyses 1-(5-phospho-beta-D-ribosyl)-5-[(5-phospho-beta-D-ribosylamino)methylideneamino]imidazole-4-carboxamide = 5-[(5-phospho-1-deoxy-D-ribulos-1-ylimino)methylamino]-1-(5-phospho-beta-D-ribosyl)imidazole-4-carboxamide. The protein operates within amino-acid biosynthesis; L-histidine biosynthesis; L-histidine from 5-phospho-alpha-D-ribose 1-diphosphate: step 4/9. In Prochlorococcus marinus (strain SARG / CCMP1375 / SS120), this protein is 1-(5-phosphoribosyl)-5-[(5-phosphoribosylamino)methylideneamino] imidazole-4-carboxamide isomerase.